Here is a 650-residue protein sequence, read N- to C-terminus: Alpha-agglutinin (650 aa).

An N-terminal signal peptide occupies residues 1–19 (MFTFLKIILWLFSLALASA). Residues asparagine 79, asparagine 109, asparagine 135, and asparagine 248 are each glycosylated (N-linked (GlcNAc...) asparagine). Cysteine 97 and cysteine 114 form a disulfide bridge. A disulfide bond links cysteine 202 and cysteine 300. Positions 216 to 322 (YDSSNNNVDL…FSTTREFIVY (107 aa)) are ig-like fold domain important for alpha-agglutinin activity, contributing to a functional binding site for a-agglutinin. O-linked (Man...) serine glycosylation occurs at serine 282. O-linked (Man...) threonine glycosylation is found at threonine 289, threonine 299, and threonine 303. Asparagine 306 carries N-linked (GlcNAc...) asparagine glycosylation. O-linked (Man...) threonine glycosylation is found at threonine 307, threonine 308, and threonine 311. Serine 314 carries O-linked (Man...) serine glycosylation. Residues threonine 315, threonine 316, and threonine 329 are each glycosylated (O-linked (Man...) threonine). O-linked (Man...) serine glycosylation is found at serine 331, serine 334, serine 335, and serine 338. O-linked (Man...) threonine glycosylation is found at threonine 339, threonine 340, threonine 341, threonine 342, and threonine 345. A run of 2 repeats spans residues 339 to 378 (TTTTDLTSINTSAYSTGSISTVETGNRTTSEVISHVVTTS) and 384 to 423 (TATTSLTIAQTSIYSTDSNITVGTDIHTTSEVISDVETIS). The tract at residues 339–423 (TTTTDLTSIN…EVISDVETIS (85 aa)) is 2 X 40 AA tandem repeats. Serine 346 is a glycosylation site (O-linked (Man...) serine). The O-linked (Man...) threonine glycan is linked to threonine 349. A glycan (O-linked (Man...) serine) is linked at serine 350. N-linked (GlcNAc...) asparagine glycans are attached at residues asparagine 364, asparagine 402, asparagine 485, asparagine 501, and asparagine 614. Glycine 627 carries GPI-anchor amidated glycine lipidation. Positions 628-650 (KASIFFSAELGSIIFLLLSYLLF) are cleaved as a propeptide — removed in mature form.

To C.albicans ALS1. As to quaternary structure, interacts with AGA2. N-glycosylated, and O-glycosylated by both PMT1 and PMT2. In terms of processing, the GPI-anchor is attached to the protein in the endoplasmic reticulum and serves to target the protein to the cell surface. There, the glucosamine-inositol phospholipid moiety is cleaved off and the GPI-modified mannoprotein is covalently attached via its lipidless GPI glycan remnant to the 1,6-beta-glucan of the outer cell wall layer.

It localises to the secreted. The protein localises to the cell wall. It is found in the membrane. Its function is as follows. Cell surface glycoprotein promoting cell-cell contact to facilitate mating. S.cerevisiae A and alpha cells express the complementary cell surface glycoproteins A-agglutinin and alpha-, respectively, which interact with one another to promote cellular aggregation during mating. The protein is Alpha-agglutinin (SAG1) of Saccharomyces cerevisiae (strain ATCC 204508 / S288c) (Baker's yeast).